Consider the following 30-residue polypeptide: Cyclotide mden-E (30 aa).

A cross-link (cyclopeptide (Gly-Asn)) is located at residues Gly1–Asn30. Disulfide bonds link Cys4–Cys20, Cys8–Cys22, and Cys13–Cys27.

Belongs to the cyclotide family. Bracelet subfamily. This is a cyclic peptide.

In terms of biological role, probably participates in a plant defense mechanism. The sequence is that of Cyclotide mden-E from Melicytus dentatus (Tree violet).